The sequence spans 318 residues: Ferrochelatase (318 aa).

2 residues coordinate Fe cation: His186 and Glu264.

This sequence belongs to the ferrochelatase family.

It is found in the cytoplasm. It catalyses the reaction heme b + 2 H(+) = protoporphyrin IX + Fe(2+). It functions in the pathway porphyrin-containing compound metabolism; protoheme biosynthesis; protoheme from protoporphyrin-IX: step 1/1. Functionally, catalyzes the ferrous insertion into protoporphyrin IX. The sequence is that of Ferrochelatase from Chlamydia caviae (strain ATCC VR-813 / DSM 19441 / 03DC25 / GPIC) (Chlamydophila caviae).